Consider the following 308-residue polypeptide: GMP synthase [glutamine-hydrolyzing] subunit B (308 aa).

The region spanning 1 to 185 is the GMPS ATP-PPase domain; the sequence is MNWEKFVEEK…LGLPEKIYNR (185 aa). An ATP-binding site is contributed by 28–34; that stretch reads SGGVDSS.

Heterodimer composed of a glutamine amidotransferase subunit (A) and a GMP-binding subunit (B).

It catalyses the reaction XMP + L-glutamine + ATP + H2O = GMP + L-glutamate + AMP + diphosphate + 2 H(+). It functions in the pathway purine metabolism; GMP biosynthesis; GMP from XMP (L-Gln route): step 1/1. In terms of biological role, catalyzes the synthesis of GMP from XMP. The chain is GMP synthase [glutamine-hydrolyzing] subunit B (guaAB) from Pyrococcus abyssi (strain GE5 / Orsay).